The following is a 569-amino-acid chain: Dicarboxylate transporter 1, chloroplastic (569 aa).

Residues 1 to 93 constitute a chloroplast transit peptide; that stretch reads MASMALSLTS…VPSPAPVSAP (93 aa). Over residues 23–74 the composition is skewed to low complexity; it reads SLKPLSKSQPSISLPSLRSNASKSPSLSHKHFLSPPSLLLPHKLKPISASSP. Positions 23 to 93 are disordered; that stretch reads SLKPLSKSQP…VPSPAPVSAP (71 aa). Positions 75 to 90 are enriched in pro residues; that stretch reads TNPPPPPAPVPSPAPV. A run of 12 helical transmembrane segments spans residues 106–126, 134–154, 172–192, 241–261, 268–288, 317–337, 367–387, 388–408, 423–443, 450–470, 490–510, and 543–563; these read PLLA…PEGV, LAIF…LGAV, AAFS…FFFA, AGGI…SNVG, LGAW…SMFL, AAFV…YVVY, IMAV…KLGV, DAVT…VVTW, WFAA…ITWF, VVGG…LLYF, FLSV…VLSF, and YGFL…GLWW.

This sequence belongs to the SLC13A/DASS transporter (TC 2.A.47) family. DIT1 subfamily. In terms of assembly, monomer. The N-terminus is blocked. In terms of tissue distribution, expressed in leaves.

The protein resides in the plastid. It is found in the chloroplast inner membrane. In terms of biological role, 2-oxoglutarate/malate translocator that transports carbon skeletons into chloroplasts for net glutamate synthesis. This translocator exchanges malate for internal succinate, fumarate and 2-oxoglutarate but not for aspartate and glutamate. Involved with DIT2 in primary ammonia assimilation and in the re-assimilation of ammonia generated by the photorespiratory pathway. Imports 2-oxoglutarate into plastids as precursor for ammonia assimilation. 2-oxoglutarate is converted to glutamate, the end product of ammonia assimilation, which is exported to the cytosol by DIT2. The sequence is that of Dicarboxylate transporter 1, chloroplastic (DIT1) from Spinacia oleracea (Spinach).